Here is a 371-residue protein sequence, read N- to C-terminus: Chaperone protein DnaJ (371 aa).

Positions 5-69 constitute a J domain; the sequence is EFYDRLGVSK…QKRAAYDQYG (65 aa). The segment at 127-209 adopts a CR-type zinc-finger fold; sequence GAEKEVSYNR…CHGTGHEKKT (83 aa). Zn(2+)-binding residues include Cys140, Cys143, Cys157, Cys160, Cys183, Cys186, Cys197, and Cys200. 4 CXXCXGXG motif repeats span residues 140-147, 157-164, 183-190, and 197-204; these read CHTCSGSG, CQKCHGSG, CDVCQGSG, and CPTCHGTG.

It belongs to the DnaJ family. Homodimer. Requires Zn(2+) as cofactor.

The protein resides in the cytoplasm. Functionally, participates actively in the response to hyperosmotic and heat shock by preventing the aggregation of stress-denatured proteins and by disaggregating proteins, also in an autonomous, DnaK-independent fashion. Unfolded proteins bind initially to DnaJ; upon interaction with the DnaJ-bound protein, DnaK hydrolyzes its bound ATP, resulting in the formation of a stable complex. GrpE releases ADP from DnaK; ATP binding to DnaK triggers the release of the substrate protein, thus completing the reaction cycle. Several rounds of ATP-dependent interactions between DnaJ, DnaK and GrpE are required for fully efficient folding. Also involved, together with DnaK and GrpE, in the DNA replication of plasmids through activation of initiation proteins. This chain is Chaperone protein DnaJ, found in Streptococcus agalactiae serotype Ia (strain ATCC 27591 / A909 / CDC SS700).